The following is a 130-amino-acid chain: Sec-independent protein translocase protein TatB (130 aa).

The chain crosses the membrane as a helical span at residues 2–22; the sequence is FANIGWGEMLVLVVVGLVVLG. A disordered region spans residues 108-130; that stretch reads DAVASAQEAPDEPVRPPFDSDAT.

This sequence belongs to the TatB family. The Tat system comprises two distinct complexes: a TatABC complex, containing multiple copies of TatA, TatB and TatC subunits, and a separate TatA complex, containing only TatA subunits. Substrates initially bind to the TatABC complex, which probably triggers association of the separate TatA complex to form the active translocon.

The protein localises to the cell membrane. Functionally, part of the twin-arginine translocation (Tat) system that transports large folded proteins containing a characteristic twin-arginine motif in their signal peptide across membranes. Together with TatC, TatB is part of a receptor directly interacting with Tat signal peptides. TatB may form an oligomeric binding site that transiently accommodates folded Tat precursor proteins before their translocation. This Mycobacterium ulcerans (strain Agy99) protein is Sec-independent protein translocase protein TatB.